A 474-amino-acid polypeptide reads, in one-letter code: 4-O-methyl-glucuronoyl methylesterase (474 aa).

Residues 1-17 (MFKPSFVALALVSYATA) form the signal peptide. The CBM1 domain occupies 19–55 (ASAPQWGQCGGIGWTGPTACPSGWACQQLNAYYSQCL). Positions 61–91 (APARTTAAPPPPPATTAAPPPPTTSAPTGSS) are disordered. Positions 68-84 (APPPPPATTAAPPPPTT) are enriched in pro residues. N-linked (GlcNAc...) asparagine glycosylation occurs at N120. The short motif at 284–289 (GCSRDG) is the GXSYXG catalytic site motif element. Disulfide bonds link C285/C421 and C317/C393. The Nucleophile role is filled by S286. The substrate site is built by K290, Q332, E340, and W384. H420 functions as the Proton donor/acceptor in the catalytic mechanism.

The protein belongs to the carbohydrate esterase 15 (CE15) family. In terms of processing, N-glycosylated.

The protein localises to the secreted. It catalyses the reaction a 4-O-methyl-alpha-D-glucuronosyl ester derivative + H2O = 4-O-methyl-alpha-D-glucuronate derivative + an alcohol + H(+). Its function is as follows. Glucuronoyl esterase which may play a significant role in biomass degradation, as it is considered to disconnect hemicellulose from lignin through the hydrolysis of the ester bond between 4-O-methyl-D-glucuronic acid residues of glucuronoxylans and aromatic alcohols of lignin. The chain is 4-O-methyl-glucuronoyl methylesterase from Cerrena unicolor (Canker rot fungus).